Here is a 639-residue protein sequence, read N- to C-terminus: E3 ubiquitin-protein ligase RNF12 (639 aa).

Disordered stretches follow at residues 1 to 28, 67 to 403, and 467 to 534; these read MESA…RLDR, RLQQ…ESER, and NDTD…GGVT. The span at 11–21 shows a compositional bias: low complexity; the sequence is STEQSESQRQS. 2 stretches are compositionally biased toward polar residues: residues 110 to 138 and 147 to 166; these read SVRQ…NPNS and INVN…QSSE. Residues 213–228 show a composition bias toward basic and acidic residues; sequence RSPDQRRTRARTDRSR. Positions 244 to 253 are enriched in polar residues; that stretch reads HSSSQTVDAS. Low complexity predominate over residues 269–286; sequence SSQMQNSSSSNETEGSSR. The span at 290–302 shows a compositional bias: polar residues; sequence HITARQQALGTEG. Low complexity-rich tracts occupy residues 303–327 and 335–348; these read QSQS…SQST and SRSS…DSSS. Positions 349–358 are enriched in polar residues; that stretch reads NAETTGTGQR. Positions 372-382 are enriched in basic and acidic residues; it reads RPGDYRQRDSI. The span at 383–399 shows a compositional bias: polar residues; that stretch reads ANRTRSRSQTPNNTVTY. Composition is skewed to pro residues over residues 473–482 and 493–506; these read NPTPVSPPAA and PEPP…PEPV. The RING-type; atypical zinc-finger motif lies at 585-626; the sequence is CSVCITEYTEGNKLRKLPCSHEYHVHCIDRWLSENSTCPICR. Residues 636–639 carry the PDZ-binding motif; sequence ESIV.

It belongs to the RNF12 family. As to quaternary structure, forms homodimers through the C-terminal region. The N-terminus interacts with the homeobox of LIM/homeobox factor lhx1/lim1, with lhx3/lim3 and lhx5/lim5, and with the N-terminus of ldb1.

Its subcellular location is the nucleus. The catalysed reaction is S-ubiquitinyl-[E2 ubiquitin-conjugating enzyme]-L-cysteine + [acceptor protein]-L-lysine = [E2 ubiquitin-conjugating enzyme]-L-cysteine + N(6)-ubiquitinyl-[acceptor protein]-L-lysine.. It functions in the pathway protein modification; protein ubiquitination. In terms of biological role, acts as an E3 ubiquitin-protein ligase specific for ldb1, mediating ubiquitination and proteasome-dependent degradation of excess ldb1 in a RING-dependent manner. Does not degrade ldb1 bound to lhx1/lim1, nor lim1 itself and thus contributes to the establishment of proper ldb1-lhx1/lim1 stoichiometry and the formation of a ldb1-lhx1/lim1 complex. Interferes with Spemann organizer function and suppresses secondary axis formation induced by ldb1 and lhx1/lim1. The polypeptide is E3 ubiquitin-protein ligase RNF12 (Xenopus tropicalis (Western clawed frog)).